A 145-amino-acid polypeptide reads, in one-letter code: MVNLKIKKIDDAAILPECAHEGDAGLDLFSVEEKVIKAGESALIGTGIQMELPPETEAQVRPRSGLALKHSITVLNSPGTIDEGYRGEVKIILINHGKEDFKVEKSMKIAQMVIKPVLKVKVEEVKELSSSDRGTGGFGSTGLKK.

Substrate contacts are provided by residues 63-65, N76, 80-82, and K90; these read RSG and TID.

It belongs to the dUTPase family. It depends on Mg(2+) as a cofactor.

The enzyme catalyses dUTP + H2O = dUMP + diphosphate + H(+). Its pathway is pyrimidine metabolism; dUMP biosynthesis; dUMP from dCTP (dUTP route): step 2/2. This enzyme is involved in nucleotide metabolism: it produces dUMP, the immediate precursor of thymidine nucleotides and it decreases the intracellular concentration of dUTP so that uracil cannot be incorporated into DNA. This Clostridium acetobutylicum (strain ATCC 824 / DSM 792 / JCM 1419 / IAM 19013 / LMG 5710 / NBRC 13948 / NRRL B-527 / VKM B-1787 / 2291 / W) protein is Deoxyuridine 5'-triphosphate nucleotidohydrolase.